Reading from the N-terminus, the 84-residue chain is Apoptosis inhibitor Rv3654c (84 aa).

Residues 1–39 (MVARHRAQAAADLASLAAAARLPSGLAAACARATLVARA) form the signal peptide.

As to quaternary structure, interacts with human polypyrimidine tract binding protein-associated splicing factor (PSF).

The protein resides in the secreted. The protein localises to the host cytoplasm. Functionally, effector protein that participates in the suppression of macrophage apoptosis by blocking the extrinsic pathway. Recognizes the host polypyrimidine tract binding protein-associated splicing factor (PSF), which probably leads to its cleavage, diminishing the level of caspase-8 in macrophages. The chain is Apoptosis inhibitor Rv3654c from Mycobacterium tuberculosis (strain ATCC 25618 / H37Rv).